A 710-amino-acid polypeptide reads, in one-letter code: Prolyl endopeptidase (710 aa).

M1 carries the post-translational modification N-acetylmethionine. An N6-acetyllysine modification is found at K157. Residues S554, D641, and H680 each act as charge relay system in the active site.

The protein belongs to the peptidase S9A family.

It is found in the cytoplasm. The enzyme catalyses Hydrolysis of Pro-|-Xaa &gt;&gt; Ala-|-Xaa in oligopeptides.. Its function is as follows. Cleaves peptide bonds on the C-terminal side of prolyl residues within peptides that are up to approximately 30 amino acids long. The protein is Prolyl endopeptidase (Prep) of Mus musculus (Mouse).